The chain runs to 1041 residues: Integrator complex subunit 3 (1041 aa).

The residue at position 1 (Met-1) is an N-acetylmethionine. Phosphoserine is present on residues Ser-500, Ser-535, and Ser-993. Positions 975–1041 are disordered; the sequence is YEDSSTKPPK…GSSAVGSDSD (67 aa). Acidic residues predominate over residues 1006 to 1020; it reads AEEESGSSSASEEED.

The protein belongs to the Integrator subunit 3 family. Component of the Integrator complex, composed of core subunits INTS1, INTS2, INTS3, INTS4, INTS5, INTS6, INTS7, INTS8, INTS9/RC74, INTS10, INTS11/CPSF3L, INTS12, INTS13, INTS14 and INTS15. The core complex associates with protein phosphatase 2A subunits PPP2CA and PPP2R1A, to form the Integrator-PP2A (INTAC) complex. Component of the SOSS complex, composed of SOSS-B (SOSS-B1/NABP2 or SOSS-B2/NABP1), SOSS-A/INTS3 and SOSS-C/INIP. SOSS complexes containing SOSS-B1/NABP2 are more abundant than complexes containing SOSS-B2/NABP1. Interacts with SOSS-B1/NABP2, SOSS-B2/NABP1 and SOSS-C/INIP; the interaction is direct. Interacts with NBN/NBS1.

It is found in the nucleus. The protein resides in the cytoplasm. In terms of biological role, component of the integrator complex, a multiprotein complex that terminates RNA polymerase II (Pol II) transcription in the promoter-proximal region of genes. The integrator complex provides a quality checkpoint during transcription elongation by driving premature transcription termination of transcripts that are unfavorably configured for transcriptional elongation: the complex terminates transcription by (1) catalyzing dephosphorylation of the C-terminal domain (CTD) of Pol II subunit POLR2A/RPB1 and SUPT5H/SPT5, (2) degrading the exiting nascent RNA transcript via endonuclease activity and (3) promoting the release of Pol II from bound DNA. The integrator complex is also involved in terminating the synthesis of non-coding Pol II transcripts, such as enhancer RNAs (eRNAs), small nuclear RNAs (snRNAs), telomerase RNAs and long non-coding RNAs (lncRNAs). Within the integrator complex, INTS3 is involved in the post-termination step: INTS3 binds INTS7 in the open conformation of integrator complex and prevents the rebinding of Pol II to the integrator after termination cycle. Mediates recruitment of cytoplasmic dynein to the nuclear envelope, probably as component of the integrator complex. Its function is as follows. Component of the SOSS complex, a multiprotein complex that functions downstream of the MRN complex to promote DNA repair and G2/M checkpoint. The SOSS complex associates with single-stranded DNA at DNA lesions and influences diverse endpoints in the cellular DNA damage response including cell-cycle checkpoint activation, recombinational repair and maintenance of genomic stability. The SOSS complex is required for efficient homologous recombination-dependent repair of double-strand breaks (DSBs) and ATM-dependent signaling pathways. In the SOSS complex, it is required for the assembly of the complex and for stabilization of the complex at DNA damage sites. The chain is Integrator complex subunit 3 (Ints3) from Mus musculus (Mouse).